The sequence spans 813 residues: Leucine--tRNA ligase (813 aa).

A 'HIGH' region motif is present at residues 39-49 (PYPSGRIHMGH). The short motif at 582 to 586 (KMSKS) is the 'KMSKS' region element. Position 585 (K585) interacts with ATP.

Belongs to the class-I aminoacyl-tRNA synthetase family.

The protein resides in the cytoplasm. The catalysed reaction is tRNA(Leu) + L-leucine + ATP = L-leucyl-tRNA(Leu) + AMP + diphosphate. The polypeptide is Leucine--tRNA ligase (Campylobacter hominis (strain ATCC BAA-381 / DSM 21671 / CCUG 45161 / LMG 19568 / NCTC 13146 / CH001A)).